A 321-amino-acid polypeptide reads, in one-letter code: Probable proline iminopeptidase (321 aa).

The AB hydrolase-1 domain maps to 35–296 (KPVVFLHGGP…IVVPDAGHSM (262 aa)). S110 functions as the Nucleophile in the catalytic mechanism. Residue D266 is part of the active site. H294 acts as the Proton donor in catalysis.

The protein belongs to the peptidase S33 family.

The protein resides in the cytoplasm. The enzyme catalyses Release of N-terminal proline from a peptide.. Its function is as follows. Specifically catalyzes the removal of N-terminal proline residues from peptides. This chain is Probable proline iminopeptidase (pip), found in Leptolyngbya boryana (Plectonema boryanum).